Here is a 122-residue protein sequence, read N- to C-terminus: MIQPQTYLNVADNSGARELMCIRIIGASNRRYAHIGDIIVAVIKEAIPNMPLERSEVIRAVIVRTRKELKRENGMIIRYDDNAAVIIDQKGNPKGTRVFGAIARELRQLNFTKIVSLAPEVL.

Belongs to the universal ribosomal protein uL14 family. In terms of assembly, part of the 50S ribosomal subunit.

Its subcellular location is the plastid. It localises to the chloroplast. Its function is as follows. Binds to 23S rRNA. This is Large ribosomal subunit protein uL14c from Fagopyrum esculentum subsp. ancestrale (Wild buckwheat).